The sequence spans 78 residues: Beta-defensin 105A (78 aa).

Residues 1–27 (MALIKKTFFFLFAMFFILVQLSSGCQA) form the signal peptide. Intrachain disulfides connect Cys-43-Cys-74, Cys-53-Cys-67, and Cys-57-Cys-73.

This sequence belongs to the beta-defensin family.

Its subcellular location is the secreted. In terms of biological role, has antimicrobial activity. In Pan troglodytes (Chimpanzee), this protein is Beta-defensin 105A (DEFB105A).